Reading from the N-terminus, the 344-residue chain is Aromatic amino acid aminotransferase (344 aa).

Position 213 is an N6-(pyridoxal phosphate)lysine (Lys-213).

It belongs to the class-II pyridoxal-phosphate-dependent aminotransferase family. Homodimer. Pyridoxal 5'-phosphate is required as a cofactor.

The enzyme catalyses an aromatic L-alpha-amino acid + 2-oxoglutarate = an aromatic oxo-acid + L-glutamate. Aminotransferase that catalyzes the conversion of aromatic amino acids and 2-oxoglutarate into corresponding aromatic oxo acids and L-glutamate. The sequence is that of Aromatic amino acid aminotransferase from Corynebacterium diphtheriae (strain ATCC 700971 / NCTC 13129 / Biotype gravis).